A 547-amino-acid polypeptide reads, in one-letter code: Chaperonin GroEL (547 aa).

Residues 30-33 (TLGP), Lys51, 87-91 (DGTTT), Gly415, 479-481 (NAA), and Asp495 contribute to the ATP site.

This sequence belongs to the chaperonin (HSP60) family. As to quaternary structure, forms a cylinder of 14 subunits composed of two heptameric rings stacked back-to-back. Interacts with the co-chaperonin GroES.

The protein localises to the cytoplasm. The enzyme catalyses ATP + H2O + a folded polypeptide = ADP + phosphate + an unfolded polypeptide.. Its function is as follows. Together with its co-chaperonin GroES, plays an essential role in assisting protein folding. The GroEL-GroES system forms a nano-cage that allows encapsulation of the non-native substrate proteins and provides a physical environment optimized to promote and accelerate protein folding. This is Chaperonin GroEL from Polynucleobacter necessarius subsp. necessarius (strain STIR1).